Consider the following 469-residue polypeptide: Protein POLLENLESS 3-LIKE 1 (469 aa).

The disordered stretch occupies residues 1–20 (MRRRESRGAKGGGFLTPPPS). TPR repeat units lie at residues 88 to 121 (DSAL…CPFE), 124 to 157 (DSID…LEQD), and 184 to 217 (ARIL…EPDN). Residues 139-191 (RITEVAELLEHKLRTLEQDKHYGGRIKIAKRSHEEQNNKTIEQEKARILGNLA) adopt a coiled-coil conformation. Residues 314 to 338 (NIHKTNSHASSESVEQNSPGLTTQP) show a composition bias toward polar residues. The tract at residues 314 to 339 (NIHKTNSHASSESVEQNSPGLTTQPR) is disordered.

Belongs to the MS5 protein family. Expressed in floral and vegetative organs. Also barely detectable in leaves and stems.

The protein localises to the nucleus. Its function is as follows. Probably involved in the regulation of cell division. The sequence is that of Protein POLLENLESS 3-LIKE 1 from Arabidopsis thaliana (Mouse-ear cress).